A 463-amino-acid chain; its full sequence is MTTETRSLYSQLPAIDRLLRDSSFLSLRDTYGHTRVVELLRQMLDEAREVIRGSQTLPAWCENWAQEVDARLTKEAQSALRPVINLTGTVLHTNLGRALQAEAAVEAVAQAMRSPVTLEYDLDDAGRGHRDRALAQLLCRITGAEDACIVNNNAAAVLLMLAATASGKEVVVSRGELVEIGGAFRIPDVMRQAGCTLHEVGTTNRTHANDYRQAVNENTALLMKVHTSNYSIQGFTKAIDEAELVALGKELDVPVVTDLGSGSLVDLSQYGLPKEPMPQELIAAGVSLVSFSGDKLLGGPQAGIIVGKKEMIARLQSHPLKRALRADKMTLAALEATLRLYLHPEALSEKLPTLRLLTRSAEVIQIQAQRLQAPLAAHYGAEFAVQVMPCLSQIGSGSLPVDRLPSAALTFTPHDGRGSHLESLAARWRELPVPVIGRIYDGRLWLDLRCLEDEQRFLEMLLK.

An N6-(pyridoxal phosphate)lysine modification is found at Lys-295.

This sequence belongs to the SelA family. Homodecamer; pentamer of dimers. Binds only one seryl-tRNA(Sec) per dimer. Pyridoxal 5'-phosphate is required as a cofactor.

The protein resides in the cytoplasm. The catalysed reaction is L-seryl-tRNA(Sec) + selenophosphate + H(+) = L-selenocysteinyl-tRNA(Sec) + phosphate. The protein operates within aminoacyl-tRNA biosynthesis; selenocysteinyl-tRNA(Sec) biosynthesis; selenocysteinyl-tRNA(Sec) from L-seryl-tRNA(Sec) (bacterial route): step 1/1. In terms of biological role, converts seryl-tRNA(Sec) to selenocysteinyl-tRNA(Sec) required for selenoprotein biosynthesis. This is L-seryl-tRNA(Sec) selenium transferase from Escherichia coli (strain 55989 / EAEC).